The following is a 137-amino-acid chain: MFNRRVLFLSVFSCAVFMLSGCSSNRFASRDANATYVNTQLKIIPRSQEKIQAQSQCSRSFSLLQKLNTDKFSMYRNQFDEINDAYFFYKRNVDLMNKDSKELMASVLDSKLDMVCVRVDNASFVGIYGKMKKVMDL.

The first 21 residues, 1–21, serve as a signal peptide directing secretion; the sequence is MFNRRVLFLSVFSCAVFMLSG. Residue Cys22 is the site of N-palmitoyl cysteine attachment. Residue Cys22 is the site of S-diacylglycerol cysteine attachment.

It localises to the membrane. This is an uncharacterized protein from Escherichia coli (strain K12).